The chain runs to 266 residues: Glycine--tRNA ligase beta subunit (266 aa).

This sequence belongs to the class-II aminoacyl-tRNA synthetase family. In terms of assembly, tetramer of two alpha and two beta subunits.

Its subcellular location is the cytoplasm. The enzyme catalyses tRNA(Gly) + glycine + ATP = glycyl-tRNA(Gly) + AMP + diphosphate. The chain is Glycine--tRNA ligase beta subunit (glyS) from Moraxella catarrhalis (Branhamella catarrhalis).